A 485-amino-acid chain; its full sequence is tRNA sulfurtransferase (485 aa).

A THUMP domain is found at 61–165 (EELIALLQRI…DDKMMLVKAR (105 aa)). Residues 183 to 184 (LI), K265, G287, and Q296 contribute to the ATP site. A disulfide bond links C344 and C456. A Rhodanese domain is found at 404–483 (LSENEVILDI…FSNVRVFAKK (80 aa)). Catalysis depends on C456, which acts as the Cysteine persulfide intermediate.

Belongs to the ThiI family.

It is found in the cytoplasm. It carries out the reaction [ThiI sulfur-carrier protein]-S-sulfanyl-L-cysteine + a uridine in tRNA + 2 reduced [2Fe-2S]-[ferredoxin] + ATP + H(+) = [ThiI sulfur-carrier protein]-L-cysteine + a 4-thiouridine in tRNA + 2 oxidized [2Fe-2S]-[ferredoxin] + AMP + diphosphate. The enzyme catalyses [ThiS sulfur-carrier protein]-C-terminal Gly-Gly-AMP + S-sulfanyl-L-cysteinyl-[cysteine desulfurase] + AH2 = [ThiS sulfur-carrier protein]-C-terminal-Gly-aminoethanethioate + L-cysteinyl-[cysteine desulfurase] + A + AMP + 2 H(+). Its pathway is cofactor biosynthesis; thiamine diphosphate biosynthesis. Its function is as follows. Catalyzes the ATP-dependent transfer of a sulfur to tRNA to produce 4-thiouridine in position 8 of tRNAs, which functions as a near-UV photosensor. Also catalyzes the transfer of sulfur to the sulfur carrier protein ThiS, forming ThiS-thiocarboxylate. This is a step in the synthesis of thiazole, in the thiamine biosynthesis pathway. The sulfur is donated as persulfide by IscS. In Haemophilus influenzae (strain PittEE), this protein is tRNA sulfurtransferase.